The chain runs to 127 residues: MEAGNRSGTPQHRQLSEIRQDLSSSPDTDAEEFRLLLLLFEQLPSFTLAAKDRSDVRLPDLGNLFLVWATECDSNSFDTDPSLPSFFALSLSNKETISYFTLPISRSIREIYLVNFTNALKNMYFSA.

Polar residues predominate over residues 1 to 13; it reads MEAGNRSGTPQHR. A disordered region spans residues 1–26; sequence MEAGNRSGTPQHRQLSEIRQDLSSSP.

This is an uncharacterized protein from Saccharomyces cerevisiae (strain ATCC 204508 / S288c) (Baker's yeast).